The sequence spans 4451 residues: Gramicidin S synthase 2 (4451 aa).

The segment at 467-1044 (DKTIHQLFTE…IQEISNYING (578 aa)) is domain 1 (proline-activating). Carrier domains follow at residues 971-1046 (VPTN…NGAK), 2006-2081 (APSS…ADGQ), 3052-3127 (RPRT…EETD), and 4090-4165 (APRN…THQE). An O-(pantetheine 4'-phosphoryl)serine mark is found at Ser1006, Ser2041, Ser3087, and Ser4125. A domain 2 (valine-activating) region spans residues 1521–2080 (DHVAVGWKDQ…SALAQYIADG (560 aa)). Residues 2538 to 3135 (YATNKIFHEL…TDTEQYMAIQ (598 aa)) form a domain 3 (ornithine-activating) region. Residues 3591 to 4173 (IQELFEEQVK…QESENNVHQP (583 aa)) are domain 4 (leucine-activating).

Belongs to the ATP-dependent AMP-binding enzyme family. As to quaternary structure, large multienzyme complex of GrsA and GrsB. Requires pantetheine 4'-phosphate as cofactor.

It functions in the pathway antibiotic biosynthesis; gramicidin S biosynthesis. Functionally, this protein is a multifunctional enzyme, able to activate and polymerize the amino acids Pro, Val, Orn and Leu. Activation sites for these AA consist of individual domains. The sequence is that of Gramicidin S synthase 2 (grsB) from Aneurinibacillus migulanus (Bacillus migulanus).